Reading from the N-terminus, the 100-residue chain is Urease subunit gamma (100 aa).

Belongs to the urease gamma subunit family. As to quaternary structure, heterotrimer of UreA (gamma), UreB (beta) and UreC (alpha) subunits. Three heterotrimers associate to form the active enzyme.

The protein localises to the cytoplasm. The enzyme catalyses urea + 2 H2O + H(+) = hydrogencarbonate + 2 NH4(+). It functions in the pathway nitrogen metabolism; urea degradation; CO(2) and NH(3) from urea (urease route): step 1/1. The sequence is that of Urease subunit gamma from Mesorhizobium japonicum (strain LMG 29417 / CECT 9101 / MAFF 303099) (Mesorhizobium loti (strain MAFF 303099)).